Reading from the N-terminus, the 169-residue chain is UPF0303 protein BMEI0598 (169 aa).

Belongs to the UPF0303 family.

The chain is UPF0303 protein BMEI0598 from Brucella melitensis biotype 1 (strain ATCC 23456 / CCUG 17765 / NCTC 10094 / 16M).